Here is a 346-residue protein sequence, read N- to C-terminus: tRNA N6-adenosine threonylcarbamoyltransferase (346 aa).

Fe cation-binding residues include His111 and His115. Residues 134–138 (LVSGG), Asp167, Gly180, and Asn279 contribute to the substrate site. Residue Asp307 participates in Fe cation binding.

The protein belongs to the KAE1 / TsaD family. The cofactor is Fe(2+).

It is found in the cytoplasm. It catalyses the reaction L-threonylcarbamoyladenylate + adenosine(37) in tRNA = N(6)-L-threonylcarbamoyladenosine(37) in tRNA + AMP + H(+). Required for the formation of a threonylcarbamoyl group on adenosine at position 37 (t(6)A37) in tRNAs that read codons beginning with adenine. Is involved in the transfer of the threonylcarbamoyl moiety of threonylcarbamoyl-AMP (TC-AMP) to the N6 group of A37, together with TsaE and TsaB. TsaD likely plays a direct catalytic role in this reaction. The sequence is that of tRNA N6-adenosine threonylcarbamoyltransferase from Burkholderia pseudomallei (strain 1106a).